We begin with the raw amino-acid sequence, 241 residues long: Orotidine 5'-phosphate decarboxylase (241 aa).

Residues aspartate 15, lysine 37, 64–73 (DLKYHDIPNT), threonine 126, arginine 187, glutamine 196, glycine 216, and arginine 217 contribute to the substrate site. The Proton donor role is filled by lysine 66.

The protein belongs to the OMP decarboxylase family. Type 1 subfamily. As to quaternary structure, homodimer.

It carries out the reaction orotidine 5'-phosphate + H(+) = UMP + CO2. The protein operates within pyrimidine metabolism; UMP biosynthesis via de novo pathway; UMP from orotate: step 2/2. Functionally, catalyzes the decarboxylation of orotidine 5'-monophosphate (OMP) to uridine 5'-monophosphate (UMP). This chain is Orotidine 5'-phosphate decarboxylase, found in Geotalea uraniireducens (strain Rf4) (Geobacter uraniireducens).